We begin with the raw amino-acid sequence, 227 residues long: Uracil-DNA glycosylase (227 aa).

The active-site Proton acceptor is the Asp68.

The protein belongs to the uracil-DNA glycosylase (UDG) superfamily. UNG family.

It is found in the cytoplasm. It catalyses the reaction Hydrolyzes single-stranded DNA or mismatched double-stranded DNA and polynucleotides, releasing free uracil.. Functionally, excises uracil residues from the DNA which can arise as a result of misincorporation of dUMP residues by DNA polymerase or due to deamination of cytosine. The chain is Uracil-DNA glycosylase from Mycolicibacterium smegmatis (strain ATCC 700084 / mc(2)155) (Mycobacterium smegmatis).